The following is a 158-amino-acid chain: uncharacterized protein (158 aa).

The helical transmembrane segment at 33-53 (VLAAVPQLGAAKVLVLLLLGV) threads the bilayer.

The protein localises to the membrane. This is an uncharacterized protein from Saccharomyces cerevisiae (strain ATCC 204508 / S288c) (Baker's yeast).